The chain runs to 907 residues: Dual serine/threonine and tyrosine protein kinase (907 aa).

Positions 373–409 (RKKENELYESLMNIANRKQEEMKDMIVETLNTMKEEL) form a coiled coil. Residues 630–884 (PKLGQELGRG…PLLGIVQPML (255 aa)) form the Protein kinase domain. ATP-binding positions include 636 to 644 (LGRGQYGVV) and Lys-659. Asp-755 (proton acceptor) is an active-site residue.

Belongs to the protein kinase superfamily. Ser/Thr protein kinase family.

The protein resides in the cytoplasm. The protein localises to the cell membrane. It is found in the apical cell membrane. It localises to the basolateral cell membrane. Its subcellular location is the cell junction. The enzyme catalyses L-seryl-[protein] + ATP = O-phospho-L-seryl-[protein] + ADP + H(+). The catalysed reaction is L-threonyl-[protein] + ATP = O-phospho-L-threonyl-[protein] + ADP + H(+). It catalyses the reaction L-tyrosyl-[protein] + ATP = O-phospho-L-tyrosyl-[protein] + ADP + H(+). Functionally, acts as a positive regulator of ERK phosphorylation downstream of fibroblast growth factor-receptor activation. Involved in the regulation of both caspase-dependent apoptosis and caspase-independent cell death. In the skin, it plays a predominant role in suppressing caspase-dependent apoptosis in response to UV stress in a range of dermal cell types. This Macaca mulatta (Rhesus macaque) protein is Dual serine/threonine and tyrosine protein kinase.